A 702-amino-acid chain; its full sequence is Ribosomal RNA large subunit methyltransferase K/L (702 aa).

The THUMP domain occupies 43 to 154 (LVYQSLMWSR…KETASIALDL (112 aa)).

Belongs to the methyltransferase superfamily. RlmKL family.

It is found in the cytoplasm. The catalysed reaction is guanosine(2445) in 23S rRNA + S-adenosyl-L-methionine = N(2)-methylguanosine(2445) in 23S rRNA + S-adenosyl-L-homocysteine + H(+). It catalyses the reaction guanosine(2069) in 23S rRNA + S-adenosyl-L-methionine = N(2)-methylguanosine(2069) in 23S rRNA + S-adenosyl-L-homocysteine + H(+). Functionally, specifically methylates the guanine in position 2445 (m2G2445) and the guanine in position 2069 (m7G2069) of 23S rRNA. This Escherichia coli O1:K1 / APEC protein is Ribosomal RNA large subunit methyltransferase K/L.